A 261-amino-acid chain; its full sequence is Ribonuclease HII (261 aa).

Positions 71 to 259 (KYIAGVDEVG…VKEAKLHFDS (189 aa)) constitute an RNase H type-2 domain. The a divalent metal cation site is built by Asp77, Glu78, and Asp169.

It belongs to the RNase HII family. Mn(2+) serves as cofactor. Requires Mg(2+) as cofactor.

Its subcellular location is the cytoplasm. The catalysed reaction is Endonucleolytic cleavage to 5'-phosphomonoester.. Its function is as follows. Endonuclease that specifically degrades the RNA of RNA-DNA hybrids. The protein is Ribonuclease HII of Listeria monocytogenes serotype 4b (strain F2365).